The following is a 37-amino-acid chain: Large ribosomal subunit protein bL36c (37 aa).

Belongs to the bacterial ribosomal protein bL36 family.

It is found in the plastid. It localises to the chloroplast. The polypeptide is Large ribosomal subunit protein bL36c (Nicotiana tomentosiformis (Tobacco)).